The chain runs to 37 residues: Large ribosomal subunit protein bL36A (37 aa).

It belongs to the bacterial ribosomal protein bL36 family.

The chain is Large ribosomal subunit protein bL36A from Arthrobacter sp. (strain FB24).